The following is a 381-amino-acid chain: Acetylornithine deacetylase (381 aa).

Histidine 79 is a Zn(2+) binding site. Aspartate 81 is a catalytic residue. Residue aspartate 111 coordinates Zn(2+). The active site involves glutamate 143. Zn(2+) is bound by residues glutamate 144, glutamate 168, and histidine 354.

This sequence belongs to the peptidase M20A family. ArgE subfamily. Homodimer. Zn(2+) serves as cofactor. The cofactor is Co(2+). It depends on glutathione as a cofactor.

It is found in the cytoplasm. The enzyme catalyses N(2)-acetyl-L-ornithine + H2O = L-ornithine + acetate. Its pathway is amino-acid biosynthesis; L-arginine biosynthesis; L-ornithine from N(2)-acetyl-L-ornithine (linear): step 1/1. Its function is as follows. Catalyzes the hydrolysis of the amide bond of N(2)-acetylated L-amino acids. Cleaves the acetyl group from N-acetyl-L-ornithine to form L-ornithine, an intermediate in L-arginine biosynthesis pathway, and a branchpoint in the synthesis of polyamines. This chain is Acetylornithine deacetylase, found in Buchnera aphidicola subsp. Schizaphis graminum (strain Sg).